A 13041-amino-acid chain; its full sequence is Nonribosomal peptide synthetase kk1B (13041 aa).

The adenylation 1 stretch occupies residues 267-663 (ANRVVDTPQK…GRRDSQIKIR (397 aa)). The Carrier 1 domain occupies 788 to 864 (ASLMTEGITL…GLINVMQQSS (77 aa)). An O-(pantetheine 4'-phosphoryl)serine modification is found at Ser-825. Residues 882 to 1313 (SFAQGRLWFL…TPIAHLQLTD (432 aa)) form a condensation 1 region. The interval 1341 to 1736 (FQKQVAACPN…GRMDFQIKIR (396 aa)) is adenylation 2. One can recognise a Carrier 2 domain in the interval 1865 to 1939 (AARNEIEAVL…NLAATIKRGS (75 aa)). An O-(pantetheine 4'-phosphoryl)serine modification is found at Ser-1899. Residues 1957–2383 (SFAQGRLWFL…DQPQTPLALL (427 aa)) form a condensation 2 region. The segment at 2418 to 2812 (QVAASPNATA…GRMDQQIKIR (395 aa)) is adenylation 3. The interval 2891-3023 (VGNDFMGWTS…EYLSKVLYAL (133 aa)) is methyltransferase (M) domain 1. Residues 3353-3427 (GARNETEAVL…DLAASIRRGS (75 aa)) enclose the Carrier 3 domain. Residue Ser-3387 is modified to O-(pantetheine 4'-phosphoryl)serine. The condensation 3 stretch occupies residues 3445 to 3869 (SFAQGRLWFL…DQPQIPIAVL (425 aa)). The segment at 3901–4300 (FRAQVVACPD…GRMDQQVKIR (400 aa)) is adenylation 4. The Carrier 4 domain occupies 4412–4486 (PPRNEIETIL…NLAAAVQRGS (75 aa)). Position 4446 is an O-(pantetheine 4'-phosphoryl)serine (Ser-4446). The tract at residues 4504-4935 (SFAQGRLWFL…TPIAALSLTD (432 aa)) is condensation 4. The adenylation 5 stretch occupies residues 4963 to 5362 (FREQVATYPD…GRMDRQLKIR (400 aa)). The methyltransferase (M) domain 2 stretch occupies residues 5430-5567 (TYAELDTLVK…VAQYFPTPEY (138 aa)). Residues 5897–5971 (QPRNEVEAVL…DLAAAIQRGS (75 aa)) form the Carrier 5 domain. The residue at position 5931 (Ser-5931) is an O-(pantetheine 4'-phosphoryl)serine. Positions 5989–6416 (SYAQGRLWFL…DQPQTPLALL (428 aa)) are condensation 5. Residues 6451 to 6845 (QVAASPNATA…GRMDQQIKIR (395 aa)) are adenylation 6. Residues 6924–7056 (VGNDFMGWTS…EYLSKVLYAL (133 aa)) are methyltransferase (M) domain 3. In terms of domain architecture, Carrier 6 spans 7386–7460 (GARNEIEAAL…DLAGAVQRGS (75 aa)). Ser-7420 carries the post-translational modification O-(pantetheine 4'-phosphoryl)serine. A condensation 6 region spans residues 7478-7901 (SFAQGRLWFL…GLETPRLPIS (424 aa)). An adenylation 7 region spans residues 7934–8335 (FRTQVAASPD…GRMDRQLKIR (402 aa)). Positions 8404–8540 (YAEIEEIDSS…AQYFPSPEYL (137 aa)) are methyltransferase (M) domain 4. In terms of domain architecture, Carrier 7 spans 8871 to 8945 (GPRNEIEALL…DLAASIQRGS (75 aa)). Ser-8905 bears the O-(pantetheine 4'-phosphoryl)serine mark. The segment at 8963–9392 (SFAQGRLWFL…PKTPIAVLPL (430 aa)) is condensation 7. The segment at 9422–9822 (FRQQVAARPD…SRMDQQVKIR (401 aa)) is adenylation 8. Residues 9943–10017 (PPTNDMERIL…DLASTIKQDS (75 aa)) enclose the Carrier 8 domain. O-(pantetheine 4'-phosphoryl)serine is present on Ser-9977. The condensation 8 stretch occupies residues 10035–10462 (SFAQGRLWFL…ETPQTPLAVL (428 aa)). An adenylation 9 region spans residues 10494-10892 (FRAQVAACPD…GRMDQQIKIR (399 aa)). Residues 10959–11105 (IYAEIEEIDS…EYLADVVGAL (147 aa)) are methyltransferase (M) domain 5. The Carrier 9 domain maps to 11428–11502 (SARNEVEAVL…DLAASIERNS (75 aa)). An O-(pantetheine 4'-phosphoryl)serine modification is found at Ser-11462. A condensation 9 region spans residues 11520-11945 (SFAQGRLWFL…EQPQTPIAVL (426 aa)). An adenylation 10 region spans residues 11977 to 12377 (FRDQVAANPR…GRMDQQIKIR (401 aa)). Residues 12495–12569 (VPRNELEASL…DLALKVSSYI (75 aa)) form the Carrier 10 domain. An O-(pantetheine 4'-phosphoryl)serine modification is found at Ser-12529. The condensation 10 stretch occupies residues 12647-13032 (FPANADCDKI…RMHEEFCDII (386 aa)).

The protein belongs to the NRP synthetase family.

It participates in secondary metabolite biosynthesis. Its function is as follows. Nonribosomal peptide synthetase; part of the gene cluster that mediates the biosynthesis of KK-1, a novel cyclic depsipeptide with 10 residues which is a promising active compound with high activity against many plant pathogens, especially Botrytis cinerea. The nonribosomal peptide synthetase (NRPS) kk1B catalyzes the elongation and cyclization of the decapeptide chain composed of 1 D-lactic acid residue (D-Lac), 1 pipecolic acid residue (Pip), 1 aspartic acid residue (Asp), 1 isoleucine residue (Ile), 1 glycine residue (Gly), 1 tyrosine residue (Tyr) and 4 valine residues (Val). The Asp, Ile and 3 Val residues are N-methylated by the 5 methyltransferase domains from the NRPS (found in modules 3, 5, 6, 7 and 9), whereas the Tyr residue is O-methylated by the cluster encoded O-methyltransferase kk1A. Cyclization with the hydroxy group of the D-lactic acid as a nucleophile is presumed to occur in the final module of NRPS, resulting in the formation of the depsipeptide ester bond through macrocyclization by the C-terminal C domain. The thioesterase kk1J is likely to be involved in the corrective mechanism of peptide chain synthesis. The D-lactate dehydrogenase kk1H is involved in the synthesis of D-lactic acid from pyruvic acid, which is recognized by the A domain of the first kk1B module. The pyrroline-5-carboxylate reductase kk1I is involved in the synthesis of the L-pipecolic acid residue of KK-1 from delta-1-pyrroline-5-carboxylate (P5C), a metabolic intermediate of lysine. It is still unclear how kk1C and kk1D are involved in the production of KK-1. The chain is Nonribosomal peptide synthetase kk1B from Curvularia clavata.